Consider the following 671-residue polypeptide: DNA ligase (671 aa).

Residues 38–42 (DKEFD), 87–88 (SL), and E113 contribute to the NAD(+) site. K115 functions as the N6-AMP-lysine intermediate in the catalytic mechanism. NAD(+) is bound by residues R136, E170, K282, and K306. 4 residues coordinate Zn(2+): C396, C399, C414, and C419. The BRCT domain occupies 586–671 (SDLQPFVGQS…LLKQEGIAID (86 aa)).

It belongs to the NAD-dependent DNA ligase family. LigA subfamily. Mg(2+) serves as cofactor. Mn(2+) is required as a cofactor.

The catalysed reaction is NAD(+) + (deoxyribonucleotide)n-3'-hydroxyl + 5'-phospho-(deoxyribonucleotide)m = (deoxyribonucleotide)n+m + AMP + beta-nicotinamide D-nucleotide.. In terms of biological role, DNA ligase that catalyzes the formation of phosphodiester linkages between 5'-phosphoryl and 3'-hydroxyl groups in double-stranded DNA using NAD as a coenzyme and as the energy source for the reaction. It is essential for DNA replication and repair of damaged DNA. This Leptospira biflexa serovar Patoc (strain Patoc 1 / Ames) protein is DNA ligase.